A 126-amino-acid polypeptide reads, in one-letter code: Protein ApaG (126 aa).

The ApaG domain maps to 2–126; it reads SDPRYQVDVS…FRLAVPGALH (125 aa).

The polypeptide is Protein ApaG (Pseudomonas fluorescens (strain ATCC BAA-477 / NRRL B-23932 / Pf-5)).